Consider the following 253-residue polypeptide: Imidazole glycerol phosphate synthase subunit HisF (253 aa).

Catalysis depends on residues D11 and D130.

It belongs to the HisA/HisF family. As to quaternary structure, heterodimer of HisH and HisF.

It localises to the cytoplasm. The catalysed reaction is 5-[(5-phospho-1-deoxy-D-ribulos-1-ylimino)methylamino]-1-(5-phospho-beta-D-ribosyl)imidazole-4-carboxamide + L-glutamine = D-erythro-1-(imidazol-4-yl)glycerol 3-phosphate + 5-amino-1-(5-phospho-beta-D-ribosyl)imidazole-4-carboxamide + L-glutamate + H(+). It functions in the pathway amino-acid biosynthesis; L-histidine biosynthesis; L-histidine from 5-phospho-alpha-D-ribose 1-diphosphate: step 5/9. Functionally, IGPS catalyzes the conversion of PRFAR and glutamine to IGP, AICAR and glutamate. The HisF subunit catalyzes the cyclization activity that produces IGP and AICAR from PRFAR using the ammonia provided by the HisH subunit. The sequence is that of Imidazole glycerol phosphate synthase subunit HisF from Clostridium beijerinckii (strain ATCC 51743 / NCIMB 8052) (Clostridium acetobutylicum).